Consider the following 115-residue polypeptide: Macrophage migration inhibitory factor homolog (115 aa).

Proline 2 (proton acceptor; via imino nitrogen) is an active-site residue. Substrate-binding residues include lysine 33 and isoleucine 65.

The protein belongs to the MIF family.

It is found in the secreted. It catalyses the reaction L-dopachrome = 5,6-dihydroxyindole-2-carboxylate. The catalysed reaction is 3-phenylpyruvate = enol-phenylpyruvate. Its function is as follows. Tautomerization of the methyl ester of L-dopachrome. Inhibits migration of human peripheral blood mononuclear cells. The chain is Macrophage migration inhibitory factor homolog from Brugia malayi (Filarial nematode worm).